We begin with the raw amino-acid sequence, 1454 residues long: MYGYLRETDDSTAINYSAYGKFLPGENTGFQLLTIGAKFLRIFRVNPYVLKEPGEDNEEWQQKTKLECMFSCRLLNKCQSVAVARVPQLPDQDSILMTFDDAKLSIVAVNEKERNMQTISLHAFENEYLRDGFTTYFNPPIVRTDPANRCAASLVYGKHIAILPFHENSKRILSYIIPLKQIDPRLDNVADMVFLEGYYEPTILFLYEPLQTTPGRACVRYDTMCIMGVSVNIVDRQFAVVWQTANLPMDCNSLLSIPKPLGGAVVFGSNTIVYLNQAVPPCGIVLNSCYDGFTKFPLKDMKHLKMTLDCSTSVYMEDGRIAVGSREGDLYLLRLVTSSGGATVKSLEFSKVCDTSIAFTLTVCAPGHLFVGSRLGDSQLLEYTLLKVTKESAKKQRLEQQNPSEIELDEDDIELYGGAIEMQQNDDDEQISESLQFRELDRLLNVGPVKSMCFGRPNYMSNDLIDAKRKDPVFDLVTASGHGKNGALCVHQRSMRPEIITSSLLEGAEQLWAVGRKENESHKYLIVSRVRSTLILELGEELVELEEQLFVTNEPTVAAGELLQGALAVQVTSTCIALVTDGQQMQEVHIDSNFPVVQASIVDPYVAVLTQNGRPLLYELAMEPYVHLREVNVNETSFATFSEQISTQLTSVSIYSDASQIMKKNTVDGRDEKPENAAENGHHVAVPKIKKEIPDDDAMLYGEDDDFLYGDAEEDEPMVAAESGESSTRLQNTRKRKRLGHDAIMSSRGGEQSDAIDPTRTYSSITHWLVVAHDNGRITIHSLPDLELVYQIGRFSNVPELLVDMTVEEEEKEKKAKQTAAQEKEKETEKKKDDAKNEEDQVNSEMKKLCEKVVEAQIVGMGINQAHPVLIAIIDEEVVLYEMFASYNPQPGHLGVAFRKLPHLIGLRTSPYVNIDGKRAPFEMEMEHGKRYTLIHPFERISSINNGVMIGGAVPTLLVYGAWGGMQTHQMTIDGSIKAFTPFNNENVLHGFVYMTQQKSELRIARMHPDFDYDMPYPVKKIEVGKTVHNVRYLMNSDIYAVVSSVPKPSNKIWVVMNDDKQEEIHEKDENFVLPAPPKYTLNLFSSQDWAAVPNTEFEFEDMEAVTAMEDVPLKSESRYGGLDTYLALATVNNYGEEVLVRGRIILCEVIEVVPEPGQPTSNRKIKVLYDKEQKGPVTGLCAINGLLLSGMGQKVFIWQFKDNDLMGISFLDMHYYVYQLHSIRTIALALDARESMSLIRFQEENKAMSIASRDDRKCAQAPMASEFLVDGMHIGFLLSDEHGNITLFSYSPEAPESNGGERLTVKAAINIGTNINAFLRVKGHTSLLDSSSPEERENIEQRMNTIFGSLDGSFGYIRPLTEKSYRRLHFLQTFIGSVTPQIAGLHIKGARSSKPSQPIVNGRNARNLIDGDVVEQYLHLSVYDKTDLARRLGVGRYHILDDLMQLRRMAYYY.

The interval 810–843 is disordered; that stretch reads EEKEKKAKQTAAQEKEKETEKKKDDAKNEEDQVN. The span at 812–843 shows a compositional bias: basic and acidic residues; that stretch reads KEKKAKQTAAQEKEKETEKKKDDAKNEEDQVN.

This sequence belongs to the CPSF1 family. In terms of assembly, CPSF is a heterotetramer composed of four distinct subunits 160 (cpsf-1), 100 (cpsf-2), 70 (cpsf-3), and 30 kDa (cpsf-4).

It is found in the nucleus. Functionally, CPSF plays a key role in pre-mRNA 3'-end formation, recognizing the AAUAAA signal sequence and interacting with poly(A)polymerase and other factors to bring about cleavage and poly(A) addition. This subunit is involved in the RNA recognition step of the polyadenylation reaction. In Caenorhabditis briggsae, this protein is Probable cleavage and polyadenylation specificity factor subunit 1.